The chain runs to 274 residues: Large ribosomal subunit protein uL2cz/uL2cy (274 aa).

2 disordered regions span residues 1-21 and 224-274; these read MAIHLYKTSTPSTRNGAVDSQ and NPVD…RRSK.

The protein belongs to the universal ribosomal protein uL2 family. In terms of assembly, part of the 50S ribosomal subunit.

It is found in the plastid. Its subcellular location is the chloroplast. The protein is Large ribosomal subunit protein uL2cz/uL2cy (rpl2-A) of Populus trichocarpa (Western balsam poplar).